The following is a 400-amino-acid chain: MERNISVEELHQIPTPKKEVEIVERKGIGHPDSVADGIAEAVSRSLSKYYIEHYGRILHHNTDQVEVVGGQSAPKYGGGLVLEPTYILLSGRATTKVGNDRVPFKSITIKAARDYLREHFRHLDVDADVMIDSRIGQGSVDLVEVYDTKKLEANDTSFGVGFAPLSETETMVLNTEKYLNGELKKKMPMVGYDIKVMGFRQKDTINLTVAAAMVDKYIHDADEYFNIKDELKQLVLDNAVEYTDKEVKVYINTADIKEDGKAVGYLTVTGMSMENGDDGSVGRGNRVNGLITPYRAMSMEAAAGKNPVTHVGKLYNVLSNKIANDIVKEEGNDIAEVLVRIVSQIGRPIDDPHVASVQVIYEGNVDHSKHKNNIRNLVDDRLAHISDLTMEFVEGKIPVF.

136-141 (GQGSVD) contacts ATP.

This sequence belongs to the AdoMet synthase 2 family. The cofactor is Mg(2+).

The enzyme catalyses L-methionine + ATP + H2O = S-adenosyl-L-methionine + phosphate + diphosphate. It functions in the pathway amino-acid biosynthesis; S-adenosyl-L-methionine biosynthesis; S-adenosyl-L-methionine from L-methionine: step 1/1. Catalyzes the formation of S-adenosylmethionine from methionine and ATP. The protein is S-adenosylmethionine synthase (mat) of Thermoplasma acidophilum (strain ATCC 25905 / DSM 1728 / JCM 9062 / NBRC 15155 / AMRC-C165).